Here is a 518-residue protein sequence, read N- to C-terminus: Arginyl-tRNA--protein transferase 1 (518 aa).

Serine 169 bears the Phosphoserine mark. Residues 175 to 203 (EKLGSGEPSHSVKVHTVPKPGKGADLSKP) form a disordered region.

The protein belongs to the R-transferase family. Monomer. Interacts with LIAT1; LIAT1 is not a substrate of ATE1, the interaction takes place in the cytoplasm and seems to increase ATE1 arginyltransferase activity.

It is found in the nucleus. The protein localises to the cytoplasm. The enzyme catalyses an N-terminal L-alpha-aminoacyl-[protein] + L-arginyl-tRNA(Arg) = an N-terminal L-arginyl-L-aminoacyl-[protein] + tRNA(Arg) + H(+). In terms of biological role, involved in the post-translational conjugation of arginine to the N-terminal aspartate or glutamate of a protein. This arginylation is required for degradation of the protein via the ubiquitin pathway. Does not arginylate cysteine residues. The polypeptide is Arginyl-tRNA--protein transferase 1 (Homo sapiens (Human)).